Reading from the N-terminus, the 255-residue chain is Lipoprotein-releasing system ATP-binding protein LolD 2 (255 aa).

The region spanning Leu9 to Ala254 is the ABC transporter domain. ATP is bound at residue Gly45–Ser52.

Belongs to the ABC transporter superfamily. Lipoprotein translocase (TC 3.A.1.125) family. The complex is composed of two ATP-binding proteins (LolD) and two transmembrane proteins (LolC and LolE).

Its subcellular location is the cell inner membrane. Functionally, part of the ABC transporter complex LolCDE involved in the translocation of mature outer membrane-directed lipoproteins, from the inner membrane to the periplasmic chaperone, LolA. Responsible for the formation of the LolA-lipoprotein complex in an ATP-dependent manner. The protein is Lipoprotein-releasing system ATP-binding protein LolD 2 of Rhodopirellula baltica (strain DSM 10527 / NCIMB 13988 / SH1).